Here is a 320-residue protein sequence, read N- to C-terminus: Eukaryotic translation initiation factor 3 subunit G (320 aa).

Residues 1–25 (MPTGDFDSKPSWADQVEEEGEDDKC) form a disordered region. Phosphoserine is present on residues Ser8 and Ser11. Residues Thr38 and Thr41 each carry the phosphothreonine modification. Phosphoserine is present on residues Ser42, Ser189, Ser223, and Ser264. The interval 209 to 234 (KTGKYVPPSLRDGASRRGESMQPNRR) is disordered. The segment covering 221 to 234 (GASRRGESMQPNRR) has biased composition (basic and acidic residues). The RRM domain occupies 239 to 317 (ATIRVTNLSE…LILNVEWAKP (79 aa)).

The protein belongs to the eIF-3 subunit G family. Component of the eukaryotic translation initiation factor 3 (eIF-3) complex, which is composed of 13 subunits: EIF3A, EIF3B, EIF3C, EIF3D, EIF3E, EIF3F, EIF3G, EIF3H, EIF3I, EIF3J, EIF3K, EIF3L and EIF3M. The eIF-3 complex appears to include 3 stable modules: module A is composed of EIF3A, EIF3B, EIF3G and EIF3I; module B is composed of EIF3F, EIF3H, and EIF3M; and module C is composed of EIF3C, EIF3D, EIF3E, EIF3K and EIF3L. EIF3C of module C binds EIF3B of module A and EIF3H of module B, thereby linking the three modules. EIF3J is a labile subunit that binds to the eIF-3 complex via EIF3B. The eIF-3 complex interacts with RPS6KB1 under conditions of nutrient depletion. Mitogenic stimulation leads to binding and activation of a complex composed of FRAP1 and RAPTOR, leading to phosphorylation and release of RPS6KB1 and binding of EIF4B to eIF-3. Interacts (via C-terminus) with AIFM1 (via N-terminus). Interacts with DHX33; the interaction is independent of RNA. In terms of processing, phosphorylated. Phosphorylation is enhanced upon serum stimulation.

It is found in the cytoplasm. The protein localises to the nucleus. The protein resides in the perinuclear region. In terms of biological role, RNA-binding component of the eukaryotic translation initiation factor 3 (eIF-3) complex, which is required for several steps in the initiation of protein synthesis. The eIF-3 complex associates with the 40S ribosome and facilitates the recruitment of eIF-1, eIF-1A, eIF-2:GTP:methionyl-tRNAi and eIF-5 to form the 43S pre-initiation complex (43S PIC). The eIF-3 complex stimulates mRNA recruitment to the 43S PIC and scanning of the mRNA for AUG recognition. The eIF-3 complex is also required for disassembly and recycling of post-termination ribosomal complexes and subsequently prevents premature joining of the 40S and 60S ribosomal subunits prior to initiation. The eIF-3 complex specifically targets and initiates translation of a subset of mRNAs involved in cell proliferation, including cell cycling, differentiation and apoptosis, and uses different modes of RNA stem-loop binding to exert either translational activation or repression. This subunit can bind 18S rRNA. The polypeptide is Eukaryotic translation initiation factor 3 subunit G (Bos taurus (Bovine)).